Here is a 201-residue protein sequence, read N- to C-terminus: Large ribosomal subunit protein uL4 (201 aa).

Positions 39–70 are disordered; the sequence is GRQGTKAQKTRSEVSGGGKKPWRQKGTGRARA.

This sequence belongs to the universal ribosomal protein uL4 family. Part of the 50S ribosomal subunit.

In terms of biological role, one of the primary rRNA binding proteins, this protein initially binds near the 5'-end of the 23S rRNA. It is important during the early stages of 50S assembly. It makes multiple contacts with different domains of the 23S rRNA in the assembled 50S subunit and ribosome. Its function is as follows. Forms part of the polypeptide exit tunnel. The sequence is that of Large ribosomal subunit protein uL4 from Marinobacter nauticus (strain ATCC 700491 / DSM 11845 / VT8) (Marinobacter aquaeolei).